We begin with the raw amino-acid sequence, 1533 residues long: Protein TALPID3 (1533 aa).

Residues 32–57 (LSANKRLPVGTGTSLNGTSRGSSDLT) are disordered. Residues 42–57 (TGTSLNGTSRGSSDLT) are compositionally biased toward polar residues. A coiled-coil region spans residues 182 to 223 (QSDLEAKVNSVTELLSKLQETDKHLQRVTEQQTSIQRKQEKL). Residues 309-321 (KEVEDTSFDKQKS) are compositionally biased toward basic and acidic residues. Disordered stretches follow at residues 309–339 (KEVE…VSRD) and 377–400 (LTRK…TPEK). S406 carries the post-translational modification Phosphoserine. A coiled-coil region spans residues 467 to 501 (SVLKDAEKILRGVQNNKKVLEENLEAIIRAKDGAA). The required for centrosomal localization stretch occupies residues 467–554 (SVLKDAEKIL…YEQKRFDQKN (88 aa)). The disordered stretch occupies residues 546-575 (EQKRFDQKNQRTKKGQNMTKDIRTNTQDKT). The segment covering 560-575 (GQNMTKDIRTNTQDKT) has biased composition (polar residues). Phosphothreonine is present on residues T1042 and T1046. At S1050 the chain carries Phosphoserine. Residue T1063 is modified to Phosphothreonine. S1066 bears the Phosphoserine mark. A disordered region spans residues 1129 to 1156 (SSPELPKPWGDGDLPLEEENPNSPQEEL).

The protein belongs to the TALPID3 family. Interacts with CCP110, CEP290, CEP97, KIF24. As to expression, ubiquitously expressed. Expressed in photoreceptor cells (at protein level).

The protein resides in the cytoplasm. It is found in the cytoskeleton. The protein localises to the microtubule organizing center. It localises to the centrosome. Its subcellular location is the photoreceptor inner segment. The protein resides in the centriole. It is found in the cilium basal body. Functionally, required for ciliogenesis and sonic hedgehog/SHH signaling. Required for the centrosomal recruitment of RAB8A and for the targeting of centriole satellite proteins to centrosomes such as of PCM1. May play a role in early ciliogenesis in the disappearance of centriolar satellites that preceeds ciliary vesicle formation. Involved in regulation of cell intracellular organization. Involved in regulation of cell polarity. Required for asymmetrical localization of CEP120 to daughter centrioles. The sequence is that of Protein TALPID3 (KIAA0586) from Homo sapiens (Human).